Consider the following 69-residue polypeptide: M-poneratoxin-Dq4e (69 aa).

Residues 1–25 (MKLSAFTLAFALILMMAIMYNMAEA) form the signal peptide. Positions 26–39 (AALADADADAEAIA) are excised as a propeptide.

In terms of tissue distribution, expressed by the venom gland.

It localises to the secreted. May have antimicrobial properties, like most ant linear peptides. In addition, when tested in vitro on the parasite Trypanosoma cruzi (responsible of the Chagas disease), is able to moderately reduce the number of the three forms (epimastigote, trypomastigote and amastigote) by inducing cell death through necrosis. This chain is M-poneratoxin-Dq4e, found in Dinoponera quadriceps (South American ant).